Consider the following 644-residue polypeptide: Exoribonuclease 2 (644 aa).

Positions 189-516 (REDLTALNFV…NHRLLKAMIT (328 aa)) constitute an RNB domain. Residues 561–643 (DTRFTAEIID…ETRNVIARPV (83 aa)) enclose the S1 motif domain.

It belongs to the RNR ribonuclease family. RNase II subfamily.

It localises to the cytoplasm. It catalyses the reaction Exonucleolytic cleavage in the 3'- to 5'-direction to yield nucleoside 5'-phosphates.. In terms of biological role, involved in mRNA degradation. Hydrolyzes single-stranded polyribonucleotides processively in the 3' to 5' direction. The protein is Exoribonuclease 2 of Yersinia pestis bv. Antiqua (strain Antiqua).